Here is a 332-residue protein sequence, read N- to C-terminus: MKQVQTKRDWKKLAYDVVEEKMITKEDAIAILEADDTEVLEIMNAAYIIRHHHFGKKVKLNMIINTKSGLCPEDCGYCSQSIISEAPIDKYAWLTQEKIVEGAHEAIRRKAGTYCIVASGRRPTDKEVNHVIGAVKEIRETTDLKICCCLGFLNEDQAGRLAEAGVHRYNHNLNTHANNYDSICSTHTYDDRVDTVQKAKQAGISPCSGAIFGMGETIEERAEIAFELQRIDADSIPCNFLVAVKGTPLEGQKELTPVECLKVLAMMRFVNPTKEIRISGGREINLRSVQPIGLFAANSIFVGDYLTTAGQEPTADWGMIADLGFEIEECAL.

Residues 53 to 282 (HFGKKVKLNM…TKEIRISGGR (230 aa)) form the Radical SAM core domain. Positions 71, 75, and 78 each coordinate [4Fe-4S] cluster. Residues cysteine 115, cysteine 147, cysteine 207, and arginine 277 each coordinate [2Fe-2S] cluster.

It belongs to the radical SAM superfamily. Biotin synthase family. In terms of assembly, homodimer. [4Fe-4S] cluster serves as cofactor. Requires [2Fe-2S] cluster as cofactor.

The catalysed reaction is (4R,5S)-dethiobiotin + (sulfur carrier)-SH + 2 reduced [2Fe-2S]-[ferredoxin] + 2 S-adenosyl-L-methionine = (sulfur carrier)-H + biotin + 2 5'-deoxyadenosine + 2 L-methionine + 2 oxidized [2Fe-2S]-[ferredoxin]. It participates in cofactor biosynthesis; biotin biosynthesis; biotin from 7,8-diaminononanoate: step 2/2. In terms of biological role, catalyzes the conversion of dethiobiotin (DTB) to biotin by the insertion of a sulfur atom into dethiobiotin via a radical-based mechanism. This Bacillus cereus (strain G9842) protein is Biotin synthase.